The following is a 493-amino-acid chain: Na(+)/H(+) antiporter subunit D (493 aa).

The next 14 membrane-spanning stretches (helical) occupy residues 4-23 (LVIL…ILFA), 30-52 (RVIS…VDVY), 72-94 (LVAD…VCLF), 107-126 (YYFY…AFLT), 130-149 (FNLF…LIVL), 162-184 (YVVI…YSIT), 204-226 (VLNV…FPLY), 233-255 (YFGP…GIYA), 270-292 (FTHT…GAVS), 299-321 (ILSY…YTQL), 325-347 (GAIY…AGAT), 368-390 (WLAW…SGFF), 405-427 (YIIA…KIFI), and 448-470 (LLLP…EPIF).

This sequence belongs to the CPA3 antiporters (TC 2.A.63) subunit D family. In terms of assembly, forms a heterooligomeric complex that consists of seven subunits: MrpA, MrpB, MrpC, MrpD, MrpE, MrpF and MrpG.

The protein localises to the cell membrane. Mnh complex is a Na(+)Li(+)/H(+) antiporter involved in Na(+) and/or Li(+) excretion and Na(+) resistance. Na(+)/H(+) antiport consumes a transmembrane electrical potential, and is thus inferred to be electrogenic. Does not transport K(+), Ca(2+) or Mg(2+). Its function is as follows. Mrp complex is a Na(+)/H(+) antiporter involved in Na(+) excretion and Na(+) resistance. The protein is Na(+)/H(+) antiporter subunit D (mrpD) of Alkalihalophilus pseudofirmus (strain ATCC BAA-2126 / JCM 17055 / OF4) (Bacillus pseudofirmus).